A 163-amino-acid chain; its full sequence is I-Kappa-B like protein N3 (163 aa).

ANK repeat units follow at residues 62–95 (LGDT…NLNT) and 100–130 (NGDT…NLQT).

It belongs to the polydnaviridae I-Kappa-B like protein family.

Suppresses the host immune response through NF-kappa-B inactivation. Possesses ankyrin repeat domains required for NF-kappa-B binding but lacks the regulatory regions required for dissociation from NF-kappa-B and degradation. Therefore, prevents host NF-kappa-B release and subsequent activation. In Microplitis demolitor (Parasitoid wasp), this protein is I-Kappa-B like protein N3 (N6).